The sequence spans 507 residues: ATP synthase subunit alpha, mitochondrial (507 aa).

171–178 provides a ligand contact to ATP; that stretch reads GDRQTGKT.

The protein belongs to the ATPase alpha/beta chains family. In terms of assembly, F-type ATPases have 2 components, CF(1) - the catalytic core - and CF(0) - the membrane proton channel. CF(1) has five subunits: alpha(3), beta(3), gamma(1), delta(1), epsilon(1). CF(0) has three main subunits: a, b and c.

It is found in the mitochondrion. Its subcellular location is the mitochondrion inner membrane. Functionally, mitochondrial membrane ATP synthase (F(1)F(0) ATP synthase or Complex V) produces ATP from ADP in the presence of a proton gradient across the membrane which is generated by electron transport complexes of the respiratory chain. F-type ATPases consist of two structural domains, F(1) - containing the extramembraneous catalytic core, and F(0) - containing the membrane proton channel, linked together by a central stalk and a peripheral stalk. During catalysis, ATP synthesis in the catalytic domain of F(1) is coupled via a rotary mechanism of the central stalk subunits to proton translocation. Subunits alpha and beta form the catalytic core in F(1). Rotation of the central stalk against the surrounding alpha(3)beta(3) subunits leads to hydrolysis of ATP in three separate catalytic sites on the beta subunits. Subunit alpha does not bear the catalytic high-affinity ATP-binding sites. The sequence is that of ATP synthase subunit alpha, mitochondrial (ATPA) from Pisum sativum (Garden pea).